Reading from the N-terminus, the 165-residue chain is uncharacterized protein (165 aa).

6 helical membrane passes run 6–26, 28–48, 54–74, 78–98, 110–130, and 138–158; these read ILFP…SGQA, LFSG…AFVY, AVTP…HFFA, WVWW…SLLV, AVSM…MAWL, and ALLK…LLLI.

It localises to the cell membrane. This is an uncharacterized protein from Bacillus subtilis (strain 168).